The sequence spans 3801 residues: Lysosomal-trafficking regulator (3801 aa).

Residues 148 to 173 (KITHRYSVRDARKTQLSTSDSEANSD) are disordered. Serine 164 is subject to Phosphoserine. At threonine 165 the chain carries Phosphothreonine. At serine 166 the chain carries Phosphoserine. Residues 662-700 (ELSSSLSSPSYRFQGILPSSGSEDLLWKWDALKAYQNFV) form a WD 1 repeat. Basic and acidic residues predominate over residues 1181–1190 (AMTEKSHQSA). Disordered stretches follow at residues 1181–1203 (AMTE…FSEE) and 1221–1256 (YEAD…SPND). The span at 1221-1238 (YEADSESNPEDGETQDDG) shows a compositional bias: acidic residues. Polar residues predominate over residues 1246–1256 (EGFSASSSPND). Residues serine 1509 and serine 1510 each carry the phosphoserine modification. The WD 2 repeat unit spans residues 1582–1626 (SQENIFLPSKWQHLVLTYLQQPQGKRRIHGKISIWVSGQRKPDVT). Serine 2105, serine 2124, serine 2213, serine 2217, and serine 2264 each carry phosphoserine. The span at 2205 to 2215 (KQLGAEPRSED) shows a compositional bias: basic and acidic residues. Residues 2205–2224 (KQLGAEPRSEDDSPGDESCP) are disordered. The region spanning 3009–3115 (AASESIRVNR…VRDDVYHNIL (107 aa)) is the BEACH-type PH domain. The region spanning 3120-3422 (PNLLEYGNIT…QLFHMAHVSR (303 aa)) is the BEACH domain. WD repeat units follow at residues 3563-3602 (SQQY…STPS), 3614-3653 (GHTE…YVQS), 3656-3699 (GHKS…VGHV), 3700-3744 (HCRE…PVRE), and 3749-3788 (KSNK…RLKQ).

As to quaternary structure, interacts with CPAP, LIP8 and ZNF521. Abundantly expressed in adult and fetal thymus, peripheral blood leukocytes, bone marrow and several regions of the adult brain.

It is found in the cytoplasm. In terms of biological role, adapter protein that regulates and/or fission of intracellular vesicles such as lysosomes. Might regulate trafficking of effectors involved in exocytosis. In cytotoxic T-cells and natural killer (NK) cells, has role in the regulation of size, number and exocytosis of lytic granules. In macrophages and dendritic cells, regulates phagosome maturation by controlling the conversion of early phagosomal compartments into late phagosomes. In macrophages and dendritic cells, specifically involved in TLR3- and TLR4-induced production of pro-inflammatory cytokines by regulating the endosomal TLR3- TICAM1/TRIF and TLR4- TICAM1/TRIF signaling pathways. The sequence is that of Lysosomal-trafficking regulator (LYST) from Homo sapiens (Human).